The sequence spans 217 residues: Pyrrolidone-carboxylate peptidase (217 aa).

Residues Glu-78, Cys-141, and His-168 contribute to the active site.

The protein belongs to the peptidase C15 family. In terms of assembly, homotetramer.

The protein localises to the cytoplasm. It carries out the reaction Release of an N-terminal pyroglutamyl group from a polypeptide, the second amino acid generally not being Pro.. Functionally, removes 5-oxoproline from various penultimate amino acid residues except L-proline. This chain is Pyrrolidone-carboxylate peptidase, found in Treponema denticola (strain ATCC 35405 / DSM 14222 / CIP 103919 / JCM 8153 / KCTC 15104).